Reading from the N-terminus, the 365-residue chain is Peptide chain release factor 2 (365 aa).

Residue Gln-252 is modified to N5-methylglutamine.

It belongs to the prokaryotic/mitochondrial release factor family. In terms of processing, methylated by PrmC. Methylation increases the termination efficiency of RF2.

The protein resides in the cytoplasm. Functionally, peptide chain release factor 2 directs the termination of translation in response to the peptide chain termination codons UGA and UAA. The chain is Peptide chain release factor 2 from Escherichia coli O9:H4 (strain HS).